The sequence spans 304 residues: Probable solute-binding protein AdeT1 (304 aa).

It belongs to the bacterial solute-binding protein 7 family.

Functionally, mediates antimicrobial resistance via active efflux. Contributes to resistance to antibiotics such as chloramphenicol, erythromycin and novobiocin. May be part of a tripartite ATP-independent periplasmic (TRAP) transport system. In Acinetobacter baumannii, this protein is Probable solute-binding protein AdeT1.